Here is a 383-residue protein sequence, read N- to C-terminus: Acetylornithine deacetylase (383 aa).

His-80 serves as a coordination point for Zn(2+). Asp-82 is an active-site residue. Residue Asp-112 coordinates Zn(2+). Residue Glu-144 is part of the active site. Zn(2+) contacts are provided by Glu-145, Glu-169, and His-355.

This sequence belongs to the peptidase M20A family. ArgE subfamily. As to quaternary structure, homodimer. It depends on Zn(2+) as a cofactor. The cofactor is Co(2+). Glutathione serves as cofactor.

It is found in the cytoplasm. It catalyses the reaction N(2)-acetyl-L-ornithine + H2O = L-ornithine + acetate. It participates in amino-acid biosynthesis; L-arginine biosynthesis; L-ornithine from N(2)-acetyl-L-ornithine (linear): step 1/1. Its function is as follows. Catalyzes the hydrolysis of the amide bond of N(2)-acetylated L-amino acids. Cleaves the acetyl group from N-acetyl-L-ornithine to form L-ornithine, an intermediate in L-arginine biosynthesis pathway, and a branchpoint in the synthesis of polyamines. In Shigella boydii serotype 18 (strain CDC 3083-94 / BS512), this protein is Acetylornithine deacetylase.